We begin with the raw amino-acid sequence, 1261 residues long: MGHSRRPVGGEKKSRGFGRSKVADVGDGRQAGKPQVKKATFETTKKKDIGVSDLTLLSKISNEAINDNLKLRFEHDEIYTYIGHVLVSVNPFRDLGIYTDNVLDSYRGKNRLEVPPHVFAVAESSYYNMKSYKDNQCVIISGESGAGKTEAAKRIMQYIASVSGGSDSSIQQTKDMVLATNPLLESFGNAKTLRNNNSSRFGKYLELEFNANGEPVGANITNYLLEKSRVVGQIANERNFHIFYQFTKAAPQKYRDMFGVQQPQSYLYTSRSKCFDVPGVDDNAEFRDTLNAMGVIGMSEAEQDNVFRMLAAILWIGNVQFAEDDSGNAAISDQSVVDFVAYLLEVDPAQVNKALTIRIMETARGGRRGSVYEVPLNTVQALAVRDALSKAIYFNLFDWIVERVNQSLTAREPVANSIGILDIYGFEIFEKNSFEQLCINYVNEKLQQIFIQLTLKAEQDEYAREQIQWTPIKYFDNKVVCSLIEDKRPPGVFAALNDACATAHADSGAADNTFVGRLNFLGQNPNFENRQGQFIVKHYAGDVSYSVEGMTDKNKDQLLKDLLNLVGSSGNQFVHTLFPNQVNQDDKRRPPTASDKIKASANDLVATLMKAQPSYIRTIKPNDNKAPREYNVGNVLHQIKYLGLQENVRIRRAGFAYRQTFNKFVERFYLLSPKTSYAGDYTWTGDAESGARQILKDTSIPAEEYQMGITKVFVKTPETLFALEAMRDRYWHNMAIRIQRAWRNYLRYRIECAIRIQRFWRRTTGGLELLKVRDQGHQVLQGRKERRRMSLLGSRRFLGDYLGIGNKGGPGEMIRNGAGISGSDDILFSCRGEVLISKFGRSSKPSPRILVLTNRHVYIVAQILVNNQLQISAERTVPIGAIKAVSTSNLKDDWFSLIIGGQEPDPLINCVFKTEFFTHLQTALRGQLNLKVSENIEYNKKPGKLATVKAIKDPAASPNVDTYKSHTIHTSPGEPPSSVSKPTPKAKQVAARPVTKGKLLRPGGPGGGPSKLASRPASRPTPKPQPLPQSQPATAQPIPAPQPAAVPRPVPQPVAAAAASHTRNASSGSVRAPPPPPPASPPAPKKATAKALYDFTSAQSNELDIRAGDVVQIVSKEGNGWWLCMNMATSVQGWTPQAYLEEQVAPTPKPAPPPPPPAAPRASPVPSANGAAATAAAAKAKPAPPAPPAKRPNMAGRKAVPAPPPAPRDSAVSMNSQDSSGGSGRGTPNSTSNASLAGGLAEALRARQHAMQGKHDDDDEW.

Residues 1–39 are disordered; it reads MGHSRRPVGGEKKSRGFGRSKVADVGDGRQAGKPQVKKA. The 680-residue stretch at 49 to 728 folds into the Myosin motor domain; sequence IGVSDLTLLS…TLFALEAMRD (680 aa). 142-149 contributes to the ATP binding site; the sequence is GESGAGKT. Serine 370 bears the Phosphoserine mark. An actin-binding region spans residues 417-499; it reads SIGILDIYGF…PGVFAALNDA (83 aa). IQ domains lie at 732–752 and 753–778; these read HNMAIRIQRAWRNYLRYRIEC and AIRIQRFWRRTTGGLELLKVRDQGHQ. The 188-residue stretch at 786–973 folds into the TH1 domain; the sequence is RRRMSLLGSR…KSHTIHTSPG (188 aa). Disordered regions lie at residues 956–1093 and 1139–1261; these read ASPN…KALY and YLEE…DDEW. Pro residues-rich tracts occupy residues 1019-1029, 1038-1052, 1072-1084, and 1147-1159; these read RPTPKPQPLPQ, IPAPQPAAVPRPVPQ, APPPPPPASPPAP, and TPKPAPPPPPPAA. Residues 1084 to 1145 enclose the SH3 domain; it reads PKKATAKALY…PQAYLEEQVA (62 aa). The span at 1160–1181 shows a compositional bias: low complexity; sequence PRASPVPSANGAAATAAAAKAK. Polar residues predominate over residues 1212–1233; that stretch reads VSMNSQDSSGGSGRGTPNSTSN. Positions 1234–1243 are enriched in low complexity; that stretch reads ASLAGGLAEA.

Belongs to the TRAFAC class myosin-kinesin ATPase superfamily. Myosin family. Post-translationally, phosphorylation of the TEDS site (Ser-370) is required for the polarization of the actin cytoskeleton. Phosphorylation probably activates the myosin-I ATPase activity.

Its subcellular location is the cytoplasm. The protein resides in the cytoskeleton. The protein localises to the actin patch. Functionally, type-I myosin implicated in the organization of the actin cytoskeleton. Required for proper actin cytoskeleton polarization. At the cell cortex, assembles in patch-like structures together with proteins from the actin-polymerizing machinery and promotes actin assembly. Functions as actin nucleation-promoting factor (NPF) for the Arp2/3 complex. Plays an important role in polarized growth, spore germination, hyphal morphogenesis, and septal wall formation. The protein is Myosin-1 (myoA) of Aspergillus oryzae (strain ATCC 42149 / RIB 40) (Yellow koji mold).